A 386-amino-acid chain; its full sequence is Cell division protein FtsZ (386 aa).

Residues 21-25, 108-110, Glu-139, Arg-143, and Asn-187 each bind GTP; these read GGGGN and GTG.

It belongs to the FtsZ family. Homodimer. Polymerizes to form a dynamic ring structure in a strictly GTP-dependent manner. Interacts directly with several other division proteins.

The protein localises to the cytoplasm. Essential cell division protein that forms a contractile ring structure (Z ring) at the future cell division site. The regulation of the ring assembly controls the timing and the location of cell division. One of the functions of the FtsZ ring is to recruit other cell division proteins to the septum to produce a new cell wall between the dividing cells. Binds GTP and shows GTPase activity. The chain is Cell division protein FtsZ from Coxiella burnetii (strain RSA 493 / Nine Mile phase I).